Reading from the N-terminus, the 141-residue chain is Large ribosomal subunit protein uL11c (141 aa).

Belongs to the universal ribosomal protein uL11 family. In terms of assembly, part of the ribosomal stalk of the 50S ribosomal subunit. Interacts with L10 and the large rRNA to form the base of the stalk. L10 forms an elongated spine to which L12 dimers bind in a sequential fashion forming a multimeric L10(L12)X complex.

It is found in the plastid. It localises to the chloroplast. Its function is as follows. Forms part of the ribosomal stalk which helps the ribosome interact with GTP-bound translation factors. This chain is Large ribosomal subunit protein uL11c, found in Guillardia theta (Cryptophyte).